Reading from the N-terminus, the 156-residue chain is Cyanate hydratase (156 aa).

Catalysis depends on residues arginine 96, glutamate 99, and serine 122.

Belongs to the cyanase family.

It carries out the reaction cyanate + hydrogencarbonate + 3 H(+) = NH4(+) + 2 CO2. Its function is as follows. Catalyzes the reaction of cyanate with bicarbonate to produce ammonia and carbon dioxide. This Burkholderia cenocepacia (strain ATCC BAA-245 / DSM 16553 / LMG 16656 / NCTC 13227 / J2315 / CF5610) (Burkholderia cepacia (strain J2315)) protein is Cyanate hydratase.